The following is a 63-amino-acid chain: Conotoxin Gm5.1 (63 aa).

A signal peptide spans 1–21 (MRYLPVFVILLLLIASIPSDT). A propeptide spanning residues 22–50 (VQLKTKDDMPLASFHGNGRRILRMLSNKR) is cleaved from the precursor.

Belongs to the conotoxin T superfamily. In terms of processing, contains 2 disulfide bonds that can be either 'C1-C3, C2-C4' or 'C1-C4, C2-C3', since these disulfide connectivities have been observed for conotoxins with cysteine framework V (for examples, see AC P0DQQ7 and AC P81755). In terms of tissue distribution, expressed by the venom duct.

The protein resides in the secreted. The polypeptide is Conotoxin Gm5.1 (Conus gloriamaris (Glory-of-the-Sea cone)).